The primary structure comprises 459 residues: Cyclic GMP-AMP synthase-like receptor 2 (459 aa).

ATP is bound by residues S68 and 79–81 (EFD). E79, D81, and D199 together coordinate Mg(2+). Residues D199 and 248 to 255 (RSSFYAVE) each bind GTP. An ATP-binding site is contributed by 252–255 (YAVE). H263 lines the Zn(2+) pocket. Residues K274 and 288 to 292 (SYYIK) each bind ATP.

The protein belongs to the mab-21 family. Mg(2+) serves as cofactor. The cofactor is Mn(2+).

The enzyme catalyses GTP + ATP = 3',2'-cGAMP + 2 diphosphate. The catalysed reaction is GTP + ATP = 2',3'-cGAMP + 2 diphosphate. It carries out the reaction GTP + ATP = pppGp(2'-5')A + diphosphate. It catalyses the reaction pppA(2'-5')pG = 3',2'-cGAMP + diphosphate. The enzyme catalyses pppGp(2'-5')A = 2',3'-cGAMP + diphosphate. The enzyme activity is specifically activated by some nucleic acid. Functionally, nucleotidyltransferase that catalyzes the formation of cyclic GMP-AMP from ATP and GTP and plays a key role in antiviral innate immunity. Directly binds some unknown nucleic acid, activating the nucleotidyltransferase activity, leading to synthesis of both 3',2'-cGAMP and 2',3'-cGAMP second messengers. 3',2'-cGAMP and 2',3'-cGAMP bind to and activate Sting, thereby triggering the antiviral immune response via activation of the NF-kappa-B transcription factor Rel (Relish). The chain is Cyclic GMP-AMP synthase-like receptor 2 from Drosophila melanogaster (Fruit fly).